The chain runs to 382 residues: Acetylornithine deacetylase (382 aa).

Histidine 79 serves as a coordination point for Zn(2+). Residue aspartate 81 is part of the active site. Aspartate 111 is a Zn(2+) binding site. The active site involves glutamate 143. Zn(2+)-binding residues include glutamate 144, glutamate 168, and histidine 354.

The protein belongs to the peptidase M20A family. ArgE subfamily. In terms of assembly, homodimer. The cofactor is Zn(2+). Requires Co(2+) as cofactor. It depends on glutathione as a cofactor.

It is found in the cytoplasm. The enzyme catalyses N(2)-acetyl-L-ornithine + H2O = L-ornithine + acetate. It participates in amino-acid biosynthesis; L-arginine biosynthesis; L-ornithine from N(2)-acetyl-L-ornithine (linear): step 1/1. Catalyzes the hydrolysis of the amide bond of N(2)-acetylated L-amino acids. Cleaves the acetyl group from N-acetyl-L-ornithine to form L-ornithine, an intermediate in L-arginine biosynthesis pathway, and a branchpoint in the synthesis of polyamines. The sequence is that of Acetylornithine deacetylase from Pasteurella multocida (strain Pm70).